A 74-amino-acid polypeptide reads, in one-letter code: Protein kish-B (74 aa).

Positions 1-22 (MTNVYSLDGLLVFALLFVCTCA) are cleaved as a signal peptide. Topologically, residues 23-52 (YFRKVPRLRSWLLSEKKGVWGVFYKAAVIG) are extracellular. A helical membrane pass occupies residues 53 to 73 (SRLHLAVSISCIAMAFYVLFI). A topological domain (cytoplasmic) is located at residue Lys74.

The protein belongs to the KISH family.

Its subcellular location is the golgi apparatus membrane. In terms of biological role, involved in the early part of the secretory pathway. The sequence is that of Protein kish-B (tmem167b) from Xenopus laevis (African clawed frog).